A 299-amino-acid chain; its full sequence is Sulfotransferase 1B1 (299 aa).

A 3'-phosphoadenylyl sulfate-binding site is contributed by K48–W53. Residue K107–H109 coordinates substrate. H109 serves as the catalytic Proton acceptor. 3'-phosphoadenylyl sulfate is bound by residues R131, S139, Y194, T228 to M233, and R258 to G260.

It belongs to the sulfotransferase 1 family. Liver specific.

It localises to the cytoplasm. It carries out the reaction a phenol + 3'-phosphoadenylyl sulfate = an aryl sulfate + adenosine 3',5'-bisphosphate + H(+). The catalysed reaction is 3,3',5-triiodo-L-thyronine + 3'-phosphoadenylyl sulfate = 3,3',5-triiodo-L-thyronine sulfate + adenosine 3',5'-bisphosphate + H(+). It catalyses the reaction 3,3',5'-triiodo-L-thyronine + 3'-phosphoadenylyl sulfate = 3,3',5'-triiodo-L-thyronine sulfate + adenosine 3',5'-bisphosphate + H(+). The enzyme catalyses 3,3'-diiodo-L-thyronine + 3'-phosphoadenylyl sulfate = 3,3'-diiodo-L-thyronine sulfate + adenosine 3',5'-bisphosphate + H(+). It carries out the reaction dopamine + 3'-phosphoadenylyl sulfate = dopamine 3-O-sulfate + adenosine 3',5'-bisphosphate + H(+). The catalysed reaction is dopamine + 3'-phosphoadenylyl sulfate = dopamine 4-O-sulfate + adenosine 3',5'-bisphosphate + H(+). It catalyses the reaction 4-ethylphenol + 3'-phosphoadenylyl sulfate = 4-ethylphenyl sulfate + adenosine 3',5'-bisphosphate + H(+). Sulfotransferase that utilizes 3'-phospho-5'-adenylyl sulfate (PAPS) as sulfonate donor to catalyze the sulfate conjugation of dopamine, small phenols such as 1-naphthol and p-nitrophenol and thyroid hormones, including 3,3'-diiodothyronine, triidothyronine (T3) and reverse triiodothyronine (rT3). May play a role in gut microbiota-host metabolic interaction. O-sulfonates 4-ethylphenol (4-EP), a dietary tyrosine-derived metabolite produced by gut bacteria. The product 4-EPS crosses the blood-brain barrier and may negatively regulate oligodendrocyte maturation and myelination, affecting the functional connectivity of different brain regions associated with the limbic system. In Mus musculus (Mouse), this protein is Sulfotransferase 1B1.